A 636-amino-acid chain; its full sequence is Capsid vertex component 2 (636 aa).

Residues 1–48 form an interaction with major capsid protein/MCP region; that stretch reads MSLLHTFWRLPVAVFFEPHEENVLRCPERVLRRLLEDAAVAMRGGGWR. Positions 97–125 are disordered; the sequence is DEGPSPRTLLQPPCRPRSSSPGTGVAGAS.

The protein belongs to the herpesviridae CVC2 protein family. In terms of assembly, heterodimerizes with CVC1. Interacts with major capsid protein/MCP and triplex capsid protein 1/TRX1 at the pentamer vertices. Interacts with the large tegument protein/LTP.

The protein resides in the virion. The protein localises to the host nucleus. In terms of biological role, capsid vertex-specific component that plays a role during viral DNA encapsidation, assuring correct genome cleavage and presumably stabilizing capsids that contain full-length viral genomes. Participates in the interaction between the capsid and the tegument through interaction with the large tegument protein/LTP. The protein is Capsid vertex component 2 of Homo sapiens (Human).